The following is a 500-amino-acid chain: MSKDFILAVDQGTTSSRAIIFDKKGNIRKIAQKEFTQIYPKSGWVEHDAMEIWGTQSGVMREALEFGRVKPDQIAAIGITNQRETVVVWDKETGDPVYNAIVWQCRRTSSICDEIKRDPQFVKYIKENTGLVVDAYFSGTKVKWILDNVEGAREKANAGKLLMGTIDTWLIWNLTRGKVHATDYSNASRTMLFNINSLEWDKKILDYLNIPESMLPEVKNSSEVFGVTDSHTLGGAEIPIAGVAGDQHAALFGHCCFEKGMAKNTYGTGCFALMNVGDKPVYSDEGLLTTIAWAENGKPTYALEGSVFIAGAVIQWIRDGLGLVRSAEDSEYYATKIDSTNGVYLVPAFVGLGTPYWDMYARGTIVGITRDTKREHIIRAALEAIAYQAKDVLECMKEDTGLDLAGLRVDGGAVQNNFLMQFQSDILQSEISKPKINEITGLGAVFLAGLAVGFWKDKQELKSILTTEKVFEPQKDSQAVAHDYRGWKKAVERSKAWAEC.

An ADP-binding site is contributed by Thr13. Positions 13, 14, and 15 each coordinate ATP. Residue Thr13 participates in sn-glycerol 3-phosphate binding. Residue Arg17 participates in ADP binding. Sn-glycerol 3-phosphate contacts are provided by Arg83, Glu84, Tyr136, and Asp246. Arg83, Glu84, Tyr136, Asp246, and Gln247 together coordinate glycerol. ADP is bound by residues Thr268 and Gly311. Thr268, Gly311, Gln315, and Gly412 together coordinate ATP. Gly412 and Asn416 together coordinate ADP.

The protein belongs to the FGGY kinase family.

It carries out the reaction glycerol + ATP = sn-glycerol 3-phosphate + ADP + H(+). It participates in polyol metabolism; glycerol degradation via glycerol kinase pathway; sn-glycerol 3-phosphate from glycerol: step 1/1. Inhibited by fructose 1,6-bisphosphate (FBP). Functionally, key enzyme in the regulation of glycerol uptake and metabolism. Catalyzes the phosphorylation of glycerol to yield sn-glycerol 3-phosphate. This is Glycerol kinase from Francisella tularensis subsp. novicida (strain U112).